Reading from the N-terminus, the 429-residue chain is UDP-N-acetylglucosamine 1-carboxyvinyltransferase (429 aa).

22–23 (KN) lines the phosphoenolpyruvate pocket. Residue R102 coordinates UDP-N-acetyl-alpha-D-glucosamine. The active-site Proton donor is the C126. At C126 the chain carries 2-(S-cysteinyl)pyruvic acid O-phosphothioketal. UDP-N-acetyl-alpha-D-glucosamine-binding positions include 131-135 (RPVDL), D316, and I338.

It belongs to the EPSP synthase family. MurA subfamily.

Its subcellular location is the cytoplasm. It catalyses the reaction phosphoenolpyruvate + UDP-N-acetyl-alpha-D-glucosamine = UDP-N-acetyl-3-O-(1-carboxyvinyl)-alpha-D-glucosamine + phosphate. Its pathway is cell wall biogenesis; peptidoglycan biosynthesis. Cell wall formation. Adds enolpyruvyl to UDP-N-acetylglucosamine. In Afipia carboxidovorans (strain ATCC 49405 / DSM 1227 / KCTC 32145 / OM5) (Oligotropha carboxidovorans), this protein is UDP-N-acetylglucosamine 1-carboxyvinyltransferase.